A 354-amino-acid polypeptide reads, in one-letter code: Eukaryotic translation initiation factor 3 subunit H (354 aa).

Residues M1 to S28 are disordered. A compositionally biased stretch (polar residues) spans Q19–S28. The 142-residue stretch at V33–A174 folds into the MPN domain.

It belongs to the eIF-3 subunit H family. As to quaternary structure, component of the eukaryotic translation initiation factor 3 (eIF-3) complex.

It localises to the cytoplasm. Its function is as follows. Component of the eukaryotic translation initiation factor 3 (eIF-3) complex, which is involved in protein synthesis of a specialized repertoire of mRNAs and, together with other initiation factors, stimulates binding of mRNA and methionyl-tRNAi to the 40S ribosome. The eIF-3 complex specifically targets and initiates translation of a subset of mRNAs involved in cell proliferation. The polypeptide is Eukaryotic translation initiation factor 3 subunit H (Monosiga brevicollis (Choanoflagellate)).